A 57-amino-acid polypeptide reads, in one-letter code: Small ribosomal subunit protein bS21 (57 aa).

It belongs to the bacterial ribosomal protein bS21 family.

The polypeptide is Small ribosomal subunit protein bS21 (Bacillus anthracis (strain A0248)).